A 185-amino-acid chain; its full sequence is Ribosome-recycling factor (185 aa).

This sequence belongs to the RRF family.

Its subcellular location is the cytoplasm. Its function is as follows. Responsible for the release of ribosomes from messenger RNA at the termination of protein biosynthesis. May increase the efficiency of translation by recycling ribosomes from one round of translation to another. The polypeptide is Ribosome-recycling factor (Clostridioides difficile (strain 630) (Peptoclostridium difficile)).